The following is a 225-amino-acid chain: MLVVFLCLLSVTLEATEGFKNLSGKVLQFKTATDNSYVKLYPEKPLSLSAFTLCMRVATELPLDREVILFAYYTPDVDELNVWRERDGRVSLYIQSSKDAAFFRLPPLSTLQTHLCVAWESATGLTAFWMDGRRSLHQVYRKGYSIRSGGTVVLGQDPDSYVGSFDVDQSFVGEIANLQMWDYVLSSAQIKAVYYNQDNRVKGNVFDWDTIEYDVTGNVLVATDN.

Residues 1–18 form the signal peptide; it reads MLVVFLCLLSVTLEATEG. The region spanning 23 to 225 is the Pentraxin (PTX) domain; sequence SGKVLQFKTA…TGNVLVATDN (203 aa). Residues cysteine 54 and cysteine 116 are joined by a disulfide bond. Ca(2+)-binding residues include aspartate 78, aspartate 157, proline 158, aspartate 159, and glutamine 169.

The protein belongs to the pentraxin family. In terms of assembly, homotrimer. Ca(2+) serves as cofactor.

It localises to the secreted. In terms of biological role, displays several functions associated with host defense: it promotes agglutination, bacterial capsular swelling, phagocytosis, and complement fixation through its calcium-dependent binding to phosphorylcholine. In Danio rerio (Zebrafish), this protein is C-reactive protein.